The primary structure comprises 301 residues: Small ribosomal subunit protein uS2 (301 aa).

The segment at 282 to 301 (VRKQPVSENENVEAAAAEQK) is disordered. Residues 289–301 (ENENVEAAAAEQK) are compositionally biased toward low complexity.

It belongs to the universal ribosomal protein uS2 family.

The protein is Small ribosomal subunit protein uS2 of Koribacter versatilis (strain Ellin345).